The primary structure comprises 330 residues: Intraflagellar transport protein 46 homolog (330 aa).

Disordered regions lie at residues 1–21 (MDRP…ATPR) and 55–112 (SIKT…EGVY). The segment covering 7–16 (ETVDIPDSED) has biased composition (acidic residues). A compositionally biased stretch (basic and acidic residues) spans 68-79 (SSSEKLCDRGSS). The segment covering 80–101 (DDDDDDDNDDDEDEDDDDDDEN) has biased composition (acidic residues).

This sequence belongs to the IFT46 family.

The protein resides in the cytoplasm. It is found in the cytoskeleton. Its subcellular location is the cilium basal body. The protein localises to the cell projection. It localises to the cilium. Functionally, forms part of a complex involved in intraflagellar transport (IFT), the bi-directional movement of particles required for the assembly, maintenance and functioning of primary cilia. The chain is Intraflagellar transport protein 46 homolog from Schistosoma japonicum (Blood fluke).